The primary structure comprises 349 residues: Phenylalanine--tRNA ligase alpha subunit (349 aa).

Glu259 contacts Mg(2+).

The protein belongs to the class-II aminoacyl-tRNA synthetase family. Phe-tRNA synthetase alpha subunit type 1 subfamily. As to quaternary structure, tetramer of two alpha and two beta subunits. It depends on Mg(2+) as a cofactor.

The protein resides in the cytoplasm. It catalyses the reaction tRNA(Phe) + L-phenylalanine + ATP = L-phenylalanyl-tRNA(Phe) + AMP + diphosphate + H(+). The sequence is that of Phenylalanine--tRNA ligase alpha subunit from Lactobacillus acidophilus (strain ATCC 700396 / NCK56 / N2 / NCFM).